A 141-amino-acid polypeptide reads, in one-letter code: MRAVVQRVDGASVVVDGETVGAIDGEGLCVLVGVTHDDTKEKAAQLARKLWSVRILHDEKSCSDLDAPLLVISQFTLYGDARKGRRPTWNAAAPGDVAEPLVDEVVAQLRALGATVATGRFGAQMRVSLTNDGPFTVLVEV.

Positions 133–134 (GP) match the Gly-cisPro motif, important for rejection of L-amino acids motif.

The protein belongs to the DTD family. As to quaternary structure, homodimer.

The protein resides in the cytoplasm. The catalysed reaction is glycyl-tRNA(Ala) + H2O = tRNA(Ala) + glycine + H(+). It catalyses the reaction a D-aminoacyl-tRNA + H2O = a tRNA + a D-alpha-amino acid + H(+). An aminoacyl-tRNA editing enzyme that deacylates mischarged D-aminoacyl-tRNAs. Also deacylates mischarged glycyl-tRNA(Ala), protecting cells against glycine mischarging by AlaRS. Acts via tRNA-based rather than protein-based catalysis; rejects L-amino acids rather than detecting D-amino acids in the active site. By recycling D-aminoacyl-tRNA to D-amino acids and free tRNA molecules, this enzyme counteracts the toxicity associated with the formation of D-aminoacyl-tRNA entities in vivo and helps enforce protein L-homochirality. This Streptomyces coelicolor (strain ATCC BAA-471 / A3(2) / M145) protein is D-aminoacyl-tRNA deacylase.